Consider the following 376-residue polypeptide: Succinyl-diaminopimelate desuccinylase (376 aa).

Position 67 (H67) interacts with Zn(2+). The active site involves D69. Residue D100 coordinates Zn(2+). The Proton acceptor role is filled by E134. The Zn(2+) site is built by E135, E163, and H349.

This sequence belongs to the peptidase M20A family. DapE subfamily. Homodimer. Requires Zn(2+) as cofactor. Co(2+) is required as a cofactor.

It carries out the reaction N-succinyl-(2S,6S)-2,6-diaminopimelate + H2O = (2S,6S)-2,6-diaminopimelate + succinate. The protein operates within amino-acid biosynthesis; L-lysine biosynthesis via DAP pathway; LL-2,6-diaminopimelate from (S)-tetrahydrodipicolinate (succinylase route): step 3/3. In terms of biological role, catalyzes the hydrolysis of N-succinyl-L,L-diaminopimelic acid (SDAP), forming succinate and LL-2,6-diaminopimelate (DAP), an intermediate involved in the bacterial biosynthesis of lysine and meso-diaminopimelic acid, an essential component of bacterial cell walls. This Shewanella denitrificans (strain OS217 / ATCC BAA-1090 / DSM 15013) protein is Succinyl-diaminopimelate desuccinylase.